We begin with the raw amino-acid sequence, 370 residues long: Protein STRICTOSIDINE SYNTHASE-LIKE 4 (370 aa).

An N-terminal signal peptide occupies residues 1 to 21 (MVLFFSTRFLFFSIFFPCLIS). N-linked (GlcNAc...) asparagine glycosylation occurs at asparagine 101. Phosphotyrosine is present on tyrosine 303.

It belongs to the strictosidine synthase family.

The protein localises to the vacuole. This is Protein STRICTOSIDINE SYNTHASE-LIKE 4 from Arabidopsis thaliana (Mouse-ear cress).